Here is a 494-residue protein sequence, read N- to C-terminus: UDP-N-acetylmuramoyl-L-alanyl-D-glutamate--L-lysine ligase (494 aa).

Residue Ser30 participates in UDP-N-acetyl-alpha-D-muramoyl-L-alanyl-D-glutamate binding. An ATP-binding site is contributed by 110 to 116; that stretch reads GTNGKTS. Residues 152 to 153, Ser179, and Arg187 contribute to the UDP-N-acetyl-alpha-D-muramoyl-L-alanyl-D-glutamate site; that span reads TT. N6-carboxylysine is present on Lys219. An L-lysine recognition motif motif is present at residues 406–409; sequence DNPA.

This sequence belongs to the MurCDEF family. MurE subfamily. Post-translationally, carboxylation is probably crucial for Mg(2+) binding and, consequently, for the gamma-phosphate positioning of ATP.

The protein resides in the cytoplasm. It catalyses the reaction UDP-N-acetyl-alpha-D-muramoyl-L-alanyl-D-glutamate + L-lysine + ATP = UDP-N-acetyl-alpha-D-muramoyl-L-alanyl-gamma-D-glutamyl-L-lysine + ADP + phosphate + H(+). It participates in cell wall biogenesis; peptidoglycan biosynthesis. In terms of biological role, catalyzes the addition of L-lysine to the nucleotide precursor UDP-N-acetylmuramoyl-L-alanyl-D-glutamate (UMAG) in the biosynthesis of bacterial cell-wall peptidoglycan. The chain is UDP-N-acetylmuramoyl-L-alanyl-D-glutamate--L-lysine ligase from Staphylococcus haemolyticus (strain JCSC1435).